A 178-amino-acid chain; its full sequence is Ribosome maturation factor RimM (178 aa).

The PRC barrel domain maps to 93–170 (EGSYYYHELR…ALTADAPAGL (78 aa)).

The protein belongs to the RimM family. Binds ribosomal protein uS19.

The protein resides in the cytoplasm. Its function is as follows. An accessory protein needed during the final step in the assembly of 30S ribosomal subunit, possibly for assembly of the head region. Essential for efficient processing of 16S rRNA. May be needed both before and after RbfA during the maturation of 16S rRNA. It has affinity for free ribosomal 30S subunits but not for 70S ribosomes. The sequence is that of Ribosome maturation factor RimM from Deinococcus geothermalis (strain DSM 11300 / CIP 105573 / AG-3a).